The primary structure comprises 118 residues: MISKPDKNKKRQRRHARVRSKISGTAECPRLNVYRSNKNIYAQVIDDVAGVTLVSASTLDSEISGGSKTELASQVGALVAKRAVEKKIENVVFDRGGYIYHGRVQALAEAARENGLKF.

The disordered stretch occupies residues 1-20 (MISKPDKNKKRQRRHARVRS). Residues 7–20 (KNKKRQRRHARVRS) are compositionally biased toward basic residues.

The protein belongs to the universal ribosomal protein uL18 family. Part of the 50S ribosomal subunit; part of the 5S rRNA/L5/L18/L25 subcomplex. Contacts the 5S and 23S rRNAs.

Functionally, this is one of the proteins that bind and probably mediate the attachment of the 5S RNA into the large ribosomal subunit, where it forms part of the central protuberance. The polypeptide is Large ribosomal subunit protein uL18 (Pediococcus pentosaceus (strain ATCC 25745 / CCUG 21536 / LMG 10740 / 183-1w)).